The sequence spans 968 residues: RNA polymerase-associated protein RapA (968 aa).

The 171-residue stretch at 164 to 334 (EVGQRHAPRV…FARLRLLDPN (171 aa)) folds into the Helicase ATP-binding domain. 177 to 184 (DEVGLGKT) serves as a coordination point for ATP. The short motif at 280–283 (DEAH) is the DEAH box element. The Helicase C-terminal domain maps to 490-664 (RVEWLLNYLV…AAPTEQEGLD (175 aa)).

This sequence belongs to the SNF2/RAD54 helicase family. RapA subfamily. In terms of assembly, interacts with the RNAP. Has a higher affinity for the core RNAP than for the holoenzyme. Its ATPase activity is stimulated by binding to RNAP.

Functionally, transcription regulator that activates transcription by stimulating RNA polymerase (RNAP) recycling in case of stress conditions such as supercoiled DNA or high salt concentrations. Probably acts by releasing the RNAP, when it is trapped or immobilized on tightly supercoiled DNA. Does not activate transcription on linear DNA. Probably not involved in DNA repair. The chain is RNA polymerase-associated protein RapA from Serratia proteamaculans (strain 568).